The primary structure comprises 29 residues: Galanin (29 aa).

Ala29 carries the alanine amide modification.

This sequence belongs to the galanin family.

Its subcellular location is the secreted. Contracts smooth muscle of the gastrointestinal and genitourinary tract, regulates growth hormone release, modulates insulin release, and may be involved in the control of adrenal secretion. This Amia calva (Bowfin) protein is Galanin (gal).